The sequence spans 176 residues: Nucleoside triphosphate/diphosphate phosphatase (176 aa).

Arginine 23 serves as the catalytic Proton donor. Asparagine 87, aspartate 103, aspartate 105, aspartate 107, aspartate 120, and glutamate 123 together coordinate Mg(2+).

This sequence belongs to the Ntdp family. It depends on Mg(2+) as a cofactor.

It catalyses the reaction a ribonucleoside 5'-triphosphate + H2O = a ribonucleoside 5'-diphosphate + phosphate + H(+). It carries out the reaction a ribonucleoside 5'-diphosphate + H2O = a ribonucleoside 5'-phosphate + phosphate + H(+). Has nucleoside phosphatase activity towards nucleoside triphosphates and nucleoside diphosphates. This Bacillus subtilis (strain 168) protein is Nucleoside triphosphate/diphosphate phosphatase (ygaC).